Consider the following 372-residue polypeptide: Glutamate 5-kinase (372 aa).

Residue lysine 14 coordinates ATP. Positions 54, 141, and 153 each coordinate substrate. 173–174 (TD) is an ATP binding site. One can recognise a PUA domain in the interval 280–358 (RGNVTLDEGA…DEIESLLGYI (79 aa)).

The protein belongs to the glutamate 5-kinase family.

The protein resides in the cytoplasm. The enzyme catalyses L-glutamate + ATP = L-glutamyl 5-phosphate + ADP. It functions in the pathway amino-acid biosynthesis; L-proline biosynthesis; L-glutamate 5-semialdehyde from L-glutamate: step 1/2. Its function is as follows. Catalyzes the transfer of a phosphate group to glutamate to form L-glutamate 5-phosphate. In Nitrosospira multiformis (strain ATCC 25196 / NCIMB 11849 / C 71), this protein is Glutamate 5-kinase.